Reading from the N-terminus, the 381-residue chain is Creatine kinase M-type (381 aa).

The 88-residue stretch at 11 to 98 (KLKFSAEEEF…FDPVIQDRHG (88 aa)) folds into the Phosphagen kinase N-terminal domain. Positions 99 to 118 (GYKPTDKHRTDLNHENLKGG) are disordered. Residues 125 to 367 (YVLSSRVRTG…KLMVEMEKKL (243 aa)) enclose the Phosphagen kinase C-terminal domain. ATP-binding positions include 128-132 (SSRVR), H191, R236, R292, 320-325 (RGTGGV), and D335.

Belongs to the ATP:guanido phosphotransferase family. As to quaternary structure, dimer of identical or non-identical chains, which can be either B (brain type) or M (muscle type). With MM being the major form in skeletal muscle and myocardium, MB existing in myocardium, and BB existing in many tissues, especially brain. As to expression, predominantly found in skeletal muscle, but not in the heart.

The protein localises to the cytoplasm. The enzyme catalyses creatine + ATP = N-phosphocreatine + ADP + H(+). Reversibly catalyzes the transfer of phosphate between ATP and various phosphogens (e.g. creatine phosphate). Creatine kinase isoenzymes play a central role in energy transduction in tissues with large, fluctuating energy demands, such as skeletal muscle, heart, brain and spermatozoa. This chain is Creatine kinase M-type, found in Gallus gallus (Chicken).